The following is a 100-amino-acid chain: Urease subunit gamma (100 aa).

The protein belongs to the urease gamma subunit family. As to quaternary structure, heterotrimer of UreA (gamma), UreB (beta) and UreC (alpha) subunits. Three heterotrimers associate to form the active enzyme.

It localises to the cytoplasm. The catalysed reaction is urea + 2 H2O + H(+) = hydrogencarbonate + 2 NH4(+). The protein operates within nitrogen metabolism; urea degradation; CO(2) and NH(3) from urea (urease route): step 1/1. In Actinobacillus pleuropneumoniae serotype 5b (strain L20), this protein is Urease subunit gamma.